The sequence spans 166 residues: MKKVYHYIIHYVRTYLLLELLAGLWLTVKYFFRKKITVQFPEEQTPLSPRFRGLLALRRYPNGEERCIACKLCEAVCPALAITIESEQREDGSRRTTRYDIDMFKCINCGLCEESCPVDSIVVTPIHHYHISERGQNIMTKEKLLAVGDLMETQLAADRAADEKYR.

2 consecutive 4Fe-4S ferredoxin-type domains span residues leucine 57–glutamate 87 and threonine 97–isoleucine 126. The [4Fe-4S] cluster site is built by cysteine 67, cysteine 70, cysteine 73, cysteine 77, cysteine 106, cysteine 109, cysteine 112, and cysteine 116.

Belongs to the complex I 23 kDa subunit family. NDH-1 is composed of 14 different subunits. Subunits NuoA, H, J, K, L, M, N constitute the membrane sector of the complex. Requires [4Fe-4S] cluster as cofactor.

It is found in the cell inner membrane. The catalysed reaction is a quinone + NADH + 5 H(+)(in) = a quinol + NAD(+) + 4 H(+)(out). Its function is as follows. NDH-1 shuttles electrons from NADH, via FMN and iron-sulfur (Fe-S) centers, to quinones in the respiratory chain. The immediate electron acceptor for the enzyme in this species is believed to be ubiquinone. Couples the redox reaction to proton translocation (for every two electrons transferred, four hydrogen ions are translocated across the cytoplasmic membrane), and thus conserves the redox energy in a proton gradient. This Legionella pneumophila (strain Paris) protein is NADH-quinone oxidoreductase subunit I.